We begin with the raw amino-acid sequence, 240 residues long: Sugar fermentation stimulation protein homolog (240 aa).

The protein belongs to the SfsA family.

This chain is Sugar fermentation stimulation protein homolog, found in Saccharolobus solfataricus (strain ATCC 35092 / DSM 1617 / JCM 11322 / P2) (Sulfolobus solfataricus).